The sequence spans 611 residues: Alkyldihydroxyacetonephosphate synthase (611 aa).

The region spanning 137–317 is the FAD-binding PCMH-type domain; it reads VKNAPDLIVL…TEAVMKVHAV (181 aa). Residues 169–175, 237–243, 250–255, and 301–307 contribute to the FAD site; these read PMGGGSN, DSFEFST, TCSSGH, and EGTLGII. R447 serves as a coordination point for substrate. The active-site Proton donor/acceptor is Y508. An important for enzyme activity region spans residues 544 to 546; the sequence is HHH. Positions 609 to 611 match the Microbody targeting signal motif; that stretch reads PKL.

This sequence belongs to the FAD-binding oxidoreductase/transferase type 4 family. Homodimer. FAD is required as a cofactor.

It is found in the peroxisome. It catalyses the reaction a long chain fatty alcohol + a 1-acylglycerone 3-phosphate = a 1-O-alkylglycerone 3-phosphate + a long-chain fatty acid + H(+). Its pathway is glycerolipid metabolism; ether lipid biosynthesis. Its function is as follows. Catalyzes the exchange of an acyl for a long-chain alkyl group and the formation of the ether bond in the biosynthesis of ether phospholipids. The chain is Alkyldihydroxyacetonephosphate synthase (eapA) from Dictyostelium discoideum (Social amoeba).